A 311-amino-acid chain; its full sequence is MPASLAAVKRRIQSTKSTRQITSAMQMVSTAKLNQIQHHTKTYQVYAEKVQAILVSLVKSHSADSLKYEQDSSLGDLFSKRPVKKTGILIITSDRGLVGSYNSNVIKSTLDKMKEDGLNADNTVFLTVGRTGAEFFKKRGMNVAYEFTGVSDVPTYREVHDVVKQAIQLYQDQVYDRLYISYSHYVNRISSQDRTEQMLPISADGLRQTEQEIGNRTAGDGVPLPASEYEIEPSDGGMLDMLVPQYAESLIYGAILDAKTSEHASSANAMRSASDNADDIISTLQLQYNRARQAAITTEITEITGGMTAQE.

It belongs to the ATPase gamma chain family. As to quaternary structure, F-type ATPases have 2 components, CF(1) - the catalytic core - and CF(0) - the membrane proton channel. CF(1) has five subunits: alpha(3), beta(3), gamma(1), delta(1), epsilon(1). CF(0) has three main subunits: a, b and c.

The protein resides in the cell membrane. Its function is as follows. Produces ATP from ADP in the presence of a proton gradient across the membrane. The gamma chain is believed to be important in regulating ATPase activity and the flow of protons through the CF(0) complex. The chain is ATP synthase gamma chain from Limosilactobacillus fermentum (strain NBRC 3956 / LMG 18251) (Lactobacillus fermentum).